The following is a 155-amino-acid chain: Large ribosomal subunit protein uL22 (155 aa).

Belongs to the universal ribosomal protein uL22 family. Part of the 50S ribosomal subunit.

Its function is as follows. This protein binds specifically to 23S rRNA. It makes multiple contacts with different domains of the 23S rRNA in the assembled 50S subunit and ribosome. The globular domain of the protein is located near the polypeptide exit tunnel on the outside of the subunit, while an extended beta-hairpin is found that lines the wall of the exit tunnel in the center of the 70S ribosome. In Archaeoglobus fulgidus (strain ATCC 49558 / DSM 4304 / JCM 9628 / NBRC 100126 / VC-16), this protein is Large ribosomal subunit protein uL22.